Reading from the N-terminus, the 749-residue chain is NAD(P)H-quinone oxidoreductase subunit 5, chloroplastic (749 aa).

16 helical membrane passes run 9-29 (WIIP…LLLV), 40-60 (WAFF…DLSI), 89-109 (IDPL…MVLI), 147-167 (IYIF…FWFT), 185-205 (GDFG…SFEF), 219-239 (NGVN…GAVA), 258-278 (TPIS…FLVA), 280-300 (LLPL…IGVI), 327-347 (LGYI…FHLI), 354-374 (ALLF…VGYS), 396-416 (ITFL…CFWS), 425-445 (WLYS…TAFY), 544-564 (TMLL…FIGV), 605-625 (IFSV…YGSV), 694-714 (GITN…KYVG), and 722-742 (LFLY…CFGI).

Belongs to the complex I subunit 5 family. In terms of assembly, NDH is composed of at least 16 different subunits, 5 of which are encoded in the nucleus.

It localises to the plastid. It is found in the chloroplast thylakoid membrane. The enzyme catalyses a plastoquinone + NADH + (n+1) H(+)(in) = a plastoquinol + NAD(+) + n H(+)(out). It catalyses the reaction a plastoquinone + NADPH + (n+1) H(+)(in) = a plastoquinol + NADP(+) + n H(+)(out). In terms of biological role, NDH shuttles electrons from NAD(P)H:plastoquinone, via FMN and iron-sulfur (Fe-S) centers, to quinones in the photosynthetic chain and possibly in a chloroplast respiratory chain. The immediate electron acceptor for the enzyme in this species is believed to be plastoquinone. Couples the redox reaction to proton translocation, and thus conserves the redox energy in a proton gradient. In Illicium oligandrum (Star anise), this protein is NAD(P)H-quinone oxidoreductase subunit 5, chloroplastic (ndhF).